The sequence spans 49 residues: Large ribosomal subunit protein bL33 (49 aa).

This sequence belongs to the bacterial ribosomal protein bL33 family.

This chain is Large ribosomal subunit protein bL33, found in Natranaerobius thermophilus (strain ATCC BAA-1301 / DSM 18059 / JW/NM-WN-LF).